The sequence spans 184 residues: NADH-quinone oxidoreductase subunit B (184 aa).

Residues Cys37, Cys38, Cys103, and Cys132 each contribute to the [4Fe-4S] cluster site. The disordered stretch occupies residues 164 to 184; it reads HEREEAAKHALPTHSMKGLLR.

This sequence belongs to the complex I 20 kDa subunit family. NDH-1 is composed of 14 different subunits. Subunits NuoB, C, D, E, F, and G constitute the peripheral sector of the complex. [4Fe-4S] cluster is required as a cofactor.

It localises to the cell membrane. The catalysed reaction is a quinone + NADH + 5 H(+)(in) = a quinol + NAD(+) + 4 H(+)(out). Its function is as follows. NDH-1 shuttles electrons from NADH, via FMN and iron-sulfur (Fe-S) centers, to quinones in the respiratory chain. The immediate electron acceptor for the enzyme in this species is believed to be a menaquinone. Couples the redox reaction to proton translocation (for every two electrons transferred, four hydrogen ions are translocated across the cytoplasmic membrane), and thus conserves the redox energy in a proton gradient. This is NADH-quinone oxidoreductase subunit B from Acidothermus cellulolyticus (strain ATCC 43068 / DSM 8971 / 11B).